The primary structure comprises 267 residues: Membrane-spanning 4-domains subfamily A member 10 (267 aa).

At 1–61 (MKAEATVIPS…KKSSLLKELG (61 aa)) the chain is on the cytoplasmic side. Residues 62–82 (AFHITIALLHLVFGGYLASIV) traverse the membrane as a helical segment. Residues 83–91 (KNLHLVVLK) lie on the Extracellular side of the membrane. A helical transmembrane segment spans residues 92-112 (SWYPFWGAASFLISGILAITM). The Cytoplasmic portion of the chain corresponds to 113 to 121 (KTFSKTYLK). A helical membrane pass occupies residues 122 to 142 (MLCLMTNLISLFCVLSGLFVI). Topologically, residues 143 to 171 (SKDLFLESPFESPIWRMYPNSTVHIQRLE) are extracellular. The helical transmembrane segment at 172-192 (LALLCFTVLELFLPVPTAVTA) threads the bilayer. At 193-267 (WRGDCPSAKN…GAAIWTQTAN (75 aa)) the chain is on the cytoplasmic side.

This sequence belongs to the MS4A family.

It is found in the membrane. May be involved in signal transduction as a component of a multimeric receptor complex. The polypeptide is Membrane-spanning 4-domains subfamily A member 10 (MS4A10) (Homo sapiens (Human)).